Here is a 204-residue protein sequence, read N- to C-terminus: Small ribosomal subunit protein uS4 (204 aa).

The segment at 20–46 (WGRPKSPINKREYGPGEHGQRRRKPSD) is disordered. Positions 28 to 38 (NKREYGPGEHG) are enriched in basic and acidic residues. The 64-residue stretch at 93 to 156 (TRLDAVVYRM…RQMPLILEAL (64 aa)) folds into the S4 RNA-binding domain.

The protein belongs to the universal ribosomal protein uS4 family. Part of the 30S ribosomal subunit. Contacts protein S5. The interaction surface between S4 and S5 is involved in control of translational fidelity.

Functionally, one of the primary rRNA binding proteins, it binds directly to 16S rRNA where it nucleates assembly of the body of the 30S subunit. Its function is as follows. With S5 and S12 plays an important role in translational accuracy. The polypeptide is Small ribosomal subunit protein uS4 (Rhodospirillum rubrum (strain ATCC 11170 / ATH 1.1.1 / DSM 467 / LMG 4362 / NCIMB 8255 / S1)).